The primary structure comprises 76 residues: Small ribosomal subunit protein bS18 (76 aa).

This sequence belongs to the bacterial ribosomal protein bS18 family. In terms of assembly, part of the 30S ribosomal subunit. Forms a tight heterodimer with protein bS6.

In terms of biological role, binds as a heterodimer with protein bS6 to the central domain of the 16S rRNA, where it helps stabilize the platform of the 30S subunit. The chain is Small ribosomal subunit protein bS18 from Carboxydothermus hydrogenoformans (strain ATCC BAA-161 / DSM 6008 / Z-2901).